The following is a 971-amino-acid chain: MDQNGASGSHPNRLSQGRGAHARERGATVSAAANRSNIIDEMAKICEADRQTFAIARRTRGHERLAVDNSDFVAVEDLILSYAEPTPEDQVEMIMSDFCSSPTYAEDEDEPSHESEPWFRFRNKRIRTYSRKRDPKSHKAVQNEKRRGSSGLSVQRDLNTSFTSMACDFDASSQKIHEVLLNLSQYFSATATASGPTPVPSQIDLPTEARQDSGDECFNAELENLRDDLLQSGFTFEASFYENEHEQEGPGTMADTIYGDSMQSVPTTRLRLESGKRNVWSDADSTLKKADVEIAENKKLLMGQTQAKNVDIEENTNFILEGIPLSEWLTPMELPEISKDVIKHIPDKKLKLEPSSQKEQKSSKDSNASKVRGASKQSCDINTKNEGTTILDQPNAAEQENLLNDGELLEEFLFNDWQPMQCSNGPSTSKNAIQGPKENINSINLDDKEQPEKQTPNKSQTISSHQLNGIRKKSFKFIEVSEEMKIKGEEFVDKVVSGLYHFSHKCNLRTEEYSDNHSQVMESTQCAEFKSAPSKPIEILDGKETYNAIAKVDVGEINGKFSPLNNDTIAEPEFCGFRTASNKAIPISEKMKIKTAEFMAEFQSKETIQQNDYLVHQPNDKPTSVGLDTALKRSIESSEEMRSKASKLVVVDTTMREPHQPTLDPVCRDLNESQFFGFRTASNKAIEITEAMEKRGAMFLAQSKATDQLNGWQPSDFPDVLPTSPNNEIHSINVENNKAVNTKTVSETEFFGFRTASNKGIVISENTKIKVAQFMSEFQAADASTDSNQPTVISEESRNIDAKFVDEAAAEDSANKPTFCNVQSLKNTSDIEHFKHDFFVEHSAKEEHPLCSQPLVRTPRRSQEIHSSLSQLAGKSPLDQATKKSVIARRNLLSLKRKRKIILSTETSTSCALPTMERFAPKPSSTSTPLADRDLNRSKDCTKNRQDAEDMSPICMQPKKSRRLGLSRSRY.

Residues methionine 1 to serine 15 are compositionally biased toward polar residues. Disordered stretches follow at residues methionine 1–serine 30, serine 130–glutamine 155, lysine 349–asparagine 395, and methionine 420–glutamine 466. Basic residues predominate over residues serine 130–lysine 139. The span at lysine 349–lysine 364 shows a compositional bias: basic and acidic residues. Composition is skewed to polar residues over residues serine 375–aspartate 392, methionine 420–alanine 432, and lysine 453–glutamine 466. BRCA2 repeat units follow at residues alanine 570–serine 604, asparagine 671–alanine 705, and serine 746–alanine 780. Positions methionine 916–tyrosine 971 are disordered. Basic and acidic residues predominate over residues alanine 931–alanine 948. A compositionally biased stretch (basic residues) spans lysine 959–tyrosine 971.

Interacts with Rad9. Interacts with spn-A/Rad51. Interacts with cyclin CycG.

It is found in the nucleus. In terms of biological role, involved in and required for double-strand break repair by meiotic and mitotic homologous recombination. During meiosis, has a dual role in the repair of meiotic double-stranded breaks and the efficient activation of the meiotic recombination checkpoint. The sequence is that of Breast cancer type 2 susceptibility protein homolog from Drosophila melanogaster (Fruit fly).